The chain runs to 324 residues: Ig gamma-1 chain C region secreted form (324 aa).

Residues 1–97 form a CH1 region; that stretch reads AKTTPPSVYP…ASSTKVDKKI (97 aa). A disulfide bridge connects residues C27 and C82. The interval 98–110 is hinge; sequence VPRDCGCKPCICT. Residues 111 to 217 form a CH2 region; it reads VPEVSSVFIF…PIEKTISKTK (107 aa). 2 cysteine pairs are disulfide-bonded: C138–C198 and C244–C302. N174 carries N-linked (GlcNAc...) asparagine glycosylation. Positions 218-324 are CH3; sequence GRPKAPQVYT…EKSLSHSPGK (107 aa).

It is found in the secreted. The protein is Ig gamma-1 chain C region secreted form (Ighg1) of Mus musculus (Mouse).